Reading from the N-terminus, the 353-residue chain is Virulence plasmid protein pGP2-D (353 aa).

The polypeptide is Virulence plasmid protein pGP2-D (Chlamydia muridarum (strain MoPn / Nigg)).